A 316-amino-acid chain; its full sequence is Adenine deaminase (316 aa).

Zn(2+) is bound by residues H14, H16, and H194. The active-site Proton donor is E197. Residue D275 participates in Zn(2+) binding. Position 276 (D276) interacts with substrate.

The protein belongs to the metallo-dependent hydrolases superfamily. Adenosine and AMP deaminases family. Adenine deaminase type 2 subfamily. Zn(2+) serves as cofactor.

The catalysed reaction is adenine + H2O + H(+) = hypoxanthine + NH4(+). Catalyzes the hydrolytic deamination of adenine to hypoxanthine. Plays an important role in the purine salvage pathway and in nitrogen catabolism. This chain is Adenine deaminase, found in Pseudomonas entomophila (strain L48).